We begin with the raw amino-acid sequence, 185 residues long: GTP-binding protein rhb1 (185 aa).

GTP-binding residues include Ser16, Gly18, Lys19, Ser20, Ser21, Val32, Tyr35, Thr38, Asn119, Asp122, and Ala150. Residue Ser20 coordinates Mg(2+). The Effector region signature appears at 35 to 43 (YYPTIENTF). Residue Thr38 coordinates Mg(2+). Position 182 is a cysteine methyl ester (Cys182). Cys182 carries the S-farnesyl cysteine lipid modification. Residues 183-185 (VIA) constitute a propeptide, removed in mature form.

The protein belongs to the small GTPase superfamily. Rheb family.

Its subcellular location is the cell membrane. The catalysed reaction is GTP + H2O = GDP + phosphate + H(+). Its function is as follows. Binds GTP and exhibits intrinsic GTPase activity. Regulates entry into stationary phase when extracellular nitrogen levels are adequate for growth. This is GTP-binding protein rhb1 (rhb1) from Schizosaccharomyces pombe (strain 972 / ATCC 24843) (Fission yeast).